Reading from the N-terminus, the 762-residue chain is Endonuclease MutS2 (762 aa).

Residue 329 to 336 participates in ATP binding; sequence GPNTGGKT. The Smr domain occupies 682-757; that stretch reads LNLIGKDVET…GSGVTVVYLE (76 aa).

This sequence belongs to the DNA mismatch repair MutS family. MutS2 subfamily. As to quaternary structure, homodimer. Binds to stalled ribosomes, contacting rRNA.

Endonuclease that is involved in the suppression of homologous recombination and thus may have a key role in the control of bacterial genetic diversity. Functionally, acts as a ribosome collision sensor, splitting the ribosome into its 2 subunits. Detects stalled/collided 70S ribosomes which it binds and splits by an ATP-hydrolysis driven conformational change. Acts upstream of the ribosome quality control system (RQC), a ribosome-associated complex that mediates the extraction of incompletely synthesized nascent chains from stalled ribosomes and their subsequent degradation. Probably generates substrates for RQC. The polypeptide is Endonuclease MutS2 (Aquifex aeolicus (strain VF5)).